We begin with the raw amino-acid sequence, 429 residues long: 3-phosphoshikimate 1-carboxyvinyltransferase (429 aa).

3-phosphoshikimate contacts are provided by Lys-11, Ser-12, and Arg-16. Lys-11 contacts phosphoenolpyruvate. Residues Gly-82 and Arg-110 each coordinate phosphoenolpyruvate. 4 residues coordinate 3-phosphoshikimate: Ser-155, Gln-157, Asp-302, and Lys-329. A phosphoenolpyruvate-binding site is contributed by Gln-157. Asp-302 acts as the Proton acceptor in catalysis. 2 residues coordinate phosphoenolpyruvate: Arg-333 and Arg-385.

Belongs to the EPSP synthase family. Monomer.

The protein resides in the cytoplasm. It catalyses the reaction 3-phosphoshikimate + phosphoenolpyruvate = 5-O-(1-carboxyvinyl)-3-phosphoshikimate + phosphate. It functions in the pathway metabolic intermediate biosynthesis; chorismate biosynthesis; chorismate from D-erythrose 4-phosphate and phosphoenolpyruvate: step 6/7. Catalyzes the transfer of the enolpyruvyl moiety of phosphoenolpyruvate (PEP) to the 5-hydroxyl of shikimate-3-phosphate (S3P) to produce enolpyruvyl shikimate-3-phosphate and inorganic phosphate. In Helicobacter pylori (strain Shi470), this protein is 3-phosphoshikimate 1-carboxyvinyltransferase.